The following is a 174-amino-acid chain: Protein COFACTOR ASSEMBLY OF COMPLEX C SUBUNIT B CCB3, chloroplastic (174 aa).

A chloroplast-targeting transit peptide spans methionine 1–valine 39. Topologically, residues serine 40–threonine 78 are lumenal. Residues alanine 79–leucine 99 form a helical membrane-spanning segment. The Stromal segment spans residues arginine 100–tryptophan 147. A helical membrane pass occupies residues phenylalanine 148–valine 168. At serine 169–asparagine 174 the chain is on the lumenal side.

This sequence belongs to the YggT family.

The protein resides in the plastid. It localises to the chloroplast thylakoid membrane. Its function is as follows. Required for the biogenesis and accumulation of native cytochrome b6 in the thylakoid membrane. Controls the conversion of apocytochrome b6 to holocytochrome b6. Required for covalent binding of the c-type heme to cytochrome b6. The sequence is that of Protein COFACTOR ASSEMBLY OF COMPLEX C SUBUNIT B CCB3, chloroplastic from Arabidopsis thaliana (Mouse-ear cress).